A 266-amino-acid chain; its full sequence is Pyridoxal phosphate phosphatase YigL (266 aa).

D8 (nucleophile) is an active-site residue. D8 is a Mg(2+) binding site. Residue L9 participates in phosphate binding. D10 is a Mg(2+) binding site. Phosphate is bound by residues 42–43 (TG) and K191. Residue D214 participates in Mg(2+) binding. N217 provides a ligand contact to phosphate.

Belongs to the HAD-like hydrolase superfamily. Cof family. It depends on Mg(2+) as a cofactor. Requires Mn(2+) as cofactor. Co(2+) serves as cofactor. Zn(2+) is required as a cofactor.

It carries out the reaction pyridoxal 5'-phosphate + H2O = pyridoxal + phosphate. The catalysed reaction is sugar phosphate + H2O = sugar + phosphate.. In terms of biological role, catalyzes the dephosphorylation of pyridoxal-phosphate (PLP) and sugar phosphate. The sequence is that of Pyridoxal phosphate phosphatase YigL (yigL) from Escherichia coli O157:H7.